A 429-amino-acid chain; its full sequence is Enolase (429 aa).

(2R)-2-phosphoglycerate is bound at residue Gln-163. The active-site Proton donor is the Glu-205. Asp-242, Glu-287, and Asp-314 together coordinate Mg(2+). (2R)-2-phosphoglycerate-binding residues include Lys-339, Arg-368, Ser-369, and Lys-390. Lys-339 (proton acceptor) is an active-site residue.

The protein belongs to the enolase family. Homooctamer. The cofactor is Mg(2+).

Its subcellular location is the cytoplasm. It localises to the secreted. The protein localises to the cell surface. The enzyme catalyses (2R)-2-phosphoglycerate = phosphoenolpyruvate + H2O. Its pathway is carbohydrate degradation; glycolysis; pyruvate from D-glyceraldehyde 3-phosphate: step 4/5. In terms of biological role, catalyzes the reversible conversion of 2-phosphoglycerate (2-PG) into phosphoenolpyruvate (PEP). It is essential for the degradation of carbohydrates via glycolysis. The protein is Enolase of Zymomonas mobilis subsp. mobilis (strain ATCC 31821 / ZM4 / CP4).